The chain runs to 209 residues: Ribosomal RNA large subunit methyltransferase E (209 aa).

S-adenosyl-L-methionine-binding residues include Gly60, Trp62, Asp80, Asp96, and Asp121. The Proton acceptor role is filled by Lys161.

This sequence belongs to the class I-like SAM-binding methyltransferase superfamily. RNA methyltransferase RlmE family.

It is found in the cytoplasm. It carries out the reaction uridine(2552) in 23S rRNA + S-adenosyl-L-methionine = 2'-O-methyluridine(2552) in 23S rRNA + S-adenosyl-L-homocysteine + H(+). In terms of biological role, specifically methylates the uridine in position 2552 of 23S rRNA at the 2'-O position of the ribose in the fully assembled 50S ribosomal subunit. The sequence is that of Ribosomal RNA large subunit methyltransferase E from Pseudomonas fluorescens (strain Pf0-1).